Here is a 492-residue protein sequence, read N- to C-terminus: MENRYISRIETISSHLLSTNDVSSQNESESITFVKPLPKNKKDHDQSIESDSSFTREKQFEEELDILGEINSKTGLFEIKQVPYQLSFDQGFFHACRAIEILTEKDPKRIICLGIAGPVGAGKTTLANKIGSLVNGVIISLQDFVKLENVKDNNYDDPVLIDFDKVISTLNELKENKTVIIPKIVNRKMESRSISLSTSKVIILEGAYALSARIRPLLDISVAITGGVHLDLIKSIMRGIVTSGKNSSKDVLAQITNVVFPMFKAFVEPDLDQAKIKIHSSFNPMSQVVEPVYVCKAKYDNNKQFFDQFLSSLNVVPVKKNFSDMYLYPPKYGVDGISQADKRNWIRIRRSEHGQFNITFYNEMMDGAVNTRPSLNFEISVKTLGGLLSLGYQIGAILNRTVEVWYDKNGVVITKEYIKELEKHFIQIKGHSRREVLDSAEKLKITGNHVPQTFLYLYFKKLKKSKNPNYSKLKPNNTNSKILKNNKDKKNL.

The interval proline 36–arginine 56 is disordered. An ATP-binding site is contributed by glycine 117–threonine 124. The CYTH domain maps to glutamate 290–lysine 460. Residues proline 468–leucine 483 are compositionally biased toward low complexity. Residues proline 468–leucine 492 form a disordered region.

This sequence belongs to the uridine kinase family.

It carries out the reaction uridine + ATP = UMP + ADP + H(+). The catalysed reaction is cytidine + ATP = CMP + ADP + H(+). Its pathway is pyrimidine metabolism; CTP biosynthesis via salvage pathway; CTP from cytidine: step 1/3. It functions in the pathway pyrimidine metabolism; UMP biosynthesis via salvage pathway; UMP from uridine: step 1/1. Catalyzes the conversion of uridine into uridine monophosphate and cytidine into cytidine monophosphate in the pyrimidine salvage pathway. The protein is Uridine-cytidine kinase D (udkD) of Dictyostelium discoideum (Social amoeba).